Consider the following 242-residue polypeptide: Peroxisomal membrane protein 11-3 (242 aa).

Residues 1 to 22 are disordered; it reads MAAAAAAAGSSDSRKPAAHPPP. The Cytoplasmic portion of the chain corresponds to 1–102; it reads MAAAAAAAGS…LRAHPHPPPA (102 aa). The chain crosses the membrane as a helical span at residues 103-123; the sequence is VALLAYGGEGVYYFLEQFVWL. The Lumenal portion of the chain corresponds to 124–214; that stretch reads AKAGLLPAHL…MALGDVTDGK (91 aa). Residues 215–235 form a helical membrane-spanning segment; that stretch reads GLLGSSTLMASAGLLSALISA. At 236-242 the chain is on the cytoplasmic side; it reads HKNWNSC.

The protein belongs to the peroxin-11 family. As to expression, expressed in seedlings, roots, leaf sheaths, spikelets and endosperm.

It localises to the peroxisome membrane. In terms of biological role, involved in peroxisomal proliferation. In Oryza sativa subsp. japonica (Rice), this protein is Peroxisomal membrane protein 11-3 (PEX11-3).